The following is a 343-amino-acid chain: Tryptophan--tRNA ligase (343 aa).

Residues 15-17 (QPT) and 24-25 (GN) contribute to the ATP site. Positions 16–25 (PTSDSLHLGN) match the 'HIGH' region motif. D145 is a binding site for L-tryptophan. ATP-binding positions include 157 to 159 (GED), I196, and 205 to 209 (KMSKS). Positions 205-209 (KMSKS) match the 'KMSKS' region motif.

Belongs to the class-I aminoacyl-tRNA synthetase family. Homodimer.

The protein resides in the cytoplasm. The catalysed reaction is tRNA(Trp) + L-tryptophan + ATP = L-tryptophyl-tRNA(Trp) + AMP + diphosphate + H(+). Functionally, catalyzes the attachment of tryptophan to tRNA(Trp). In Mycobacterium leprae (strain TN), this protein is Tryptophan--tRNA ligase.